Consider the following 324-residue polypeptide: Phospho-N-acetylmuramoyl-pentapeptide-transferase (324 aa).

Transmembrane regions (helical) follow at residues 5–25 (IIVI…PLFI), 52–72 (PTMG…WVTA), 76–96 (VLSA…VLGF), 117–137 (FIGQ…SGFS), 147–167 (WSFD…VGGS), 176–196 (LDGL…VLAW), 203–223 (VAVF…FNAH), 227–247 (VFMG…VAVL), 250–270 (LELL…SVII), and 302–322 (IVVT…YIEV).

The protein belongs to the glycosyltransferase 4 family. MraY subfamily. The cofactor is Mg(2+).

The protein localises to the cell membrane. The catalysed reaction is UDP-N-acetyl-alpha-D-muramoyl-L-alanyl-gamma-D-glutamyl-meso-2,6-diaminopimeloyl-D-alanyl-D-alanine + di-trans,octa-cis-undecaprenyl phosphate = di-trans,octa-cis-undecaprenyl diphospho-N-acetyl-alpha-D-muramoyl-L-alanyl-D-glutamyl-meso-2,6-diaminopimeloyl-D-alanyl-D-alanine + UMP. Its pathway is cell wall biogenesis; peptidoglycan biosynthesis. Its function is as follows. Catalyzes the initial step of the lipid cycle reactions in the biosynthesis of the cell wall peptidoglycan: transfers peptidoglycan precursor phospho-MurNAc-pentapeptide from UDP-MurNAc-pentapeptide onto the lipid carrier undecaprenyl phosphate, yielding undecaprenyl-pyrophosphoryl-MurNAc-pentapeptide, known as lipid I. This is Phospho-N-acetylmuramoyl-pentapeptide-transferase from Geobacillus thermodenitrificans (strain NG80-2).